The following is a 482-amino-acid chain: Glutamyl-tRNA(Gln) amidotransferase subunit A (482 aa).

Catalysis depends on charge relay system residues Lys-75 and Ser-150. Ser-174 acts as the Acyl-ester intermediate in catalysis.

This sequence belongs to the amidase family. GatA subfamily. In terms of assembly, heterotrimer of A, B and C subunits.

It catalyses the reaction L-glutamyl-tRNA(Gln) + L-glutamine + ATP + H2O = L-glutaminyl-tRNA(Gln) + L-glutamate + ADP + phosphate + H(+). Functionally, allows the formation of correctly charged Gln-tRNA(Gln) through the transamidation of misacylated Glu-tRNA(Gln) in organisms which lack glutaminyl-tRNA synthetase. The reaction takes place in the presence of glutamine and ATP through an activated gamma-phospho-Glu-tRNA(Gln). This is Glutamyl-tRNA(Gln) amidotransferase subunit A from Thermosynechococcus vestitus (strain NIES-2133 / IAM M-273 / BP-1).